Consider the following 286-residue polypeptide: uncharacterized protein (286 aa).

The next 7 membrane-spanning stretches (helical) occupy residues 30–50 (LTFMVAAFGIFFIFLVALTVQ), 68–88 (LSTIAVITSFVSLILYFVTAF), 99–119 (WFWALIITDVISYGITLGILL), 136–156 (IVYAFLGASLVFGSVWGLSAL), 169–189 (LFHILLWAFVISIVASLLSFI), 205–225 (IIPGLSLIVGGIFSLISVYFV), and 254–274 (SALFFGAWLISSFMNLVYFIL).

It localises to the cell membrane. This is an uncharacterized protein from Mycoplasma genitalium (strain ATCC 33530 / DSM 19775 / NCTC 10195 / G37) (Mycoplasmoides genitalium).